Consider the following 48-residue polypeptide: uncharacterized protein (48 aa).

It is found in the plastid. The protein localises to the cyanelle. This is an uncharacterized protein from Cyanophora paradoxa.